Here is a 405-residue protein sequence, read N- to C-terminus: Deoxyguanosinetriphosphate triphosphohydrolase-like protein (405 aa).

In terms of domain architecture, HD spans 75 to 219; the sequence is RLTHTIEVAQ…AAIADDIAYN (145 aa).

It belongs to the dGTPase family. Type 2 subfamily.

This chain is Deoxyguanosinetriphosphate triphosphohydrolase-like protein, found in Agrobacterium fabrum (strain C58 / ATCC 33970) (Agrobacterium tumefaciens (strain C58)).